The following is a 365-amino-acid chain: tRNA/tmRNA (uracil-C(5))-methyltransferase (365 aa).

S-adenosyl-L-methionine is bound by residues Gln-189, Tyr-217, Asn-222, Glu-238, and Asp-298. The Nucleophile role is filled by Cys-323. Residue Glu-357 is the Proton acceptor of the active site.

This sequence belongs to the class I-like SAM-binding methyltransferase superfamily. RNA M5U methyltransferase family. TrmA subfamily.

The catalysed reaction is uridine(54) in tRNA + S-adenosyl-L-methionine = 5-methyluridine(54) in tRNA + S-adenosyl-L-homocysteine + H(+). The enzyme catalyses uridine(341) in tmRNA + S-adenosyl-L-methionine = 5-methyluridine(341) in tmRNA + S-adenosyl-L-homocysteine + H(+). In terms of biological role, dual-specificity methyltransferase that catalyzes the formation of 5-methyluridine at position 54 (m5U54) in all tRNAs, and that of position 341 (m5U341) in tmRNA (transfer-mRNA). This Psychromonas ingrahamii (strain DSM 17664 / CCUG 51855 / 37) protein is tRNA/tmRNA (uracil-C(5))-methyltransferase.